The primary structure comprises 1053 residues: Serine/threonine-protein phosphatase 6 regulatory ankyrin repeat subunit A (1053 aa).

ANK repeat units lie at residues E40–A69, K73–A102, N106–V135, A139–A168, K172–C201, K205–E234, Y238–Q267, K271–M301, D305–C334, N338–K367, H371–T400, F404–K433, F437–D466, R470–I500, Q504–M534, A549–V578, S582–V611, L616–A645, N652–A681, W685–L714, R718–A747, H755–G786, A788–N817, K822–S851, T855–L885, S889–L918, and A925–A954. A phosphoserine mark is found at S1007 and S1011.

As to quaternary structure, protein phosphatase 6 (PP6) holoenzyme is proposed to be a heterotrimeric complex formed by the catalytic subunit, a SAPS domain-containing subunit (PP6R) and an ankyrin repeat-domain containing regulatory subunit (ARS). Interacts with PPP1C and HNRPK. Interacts with PPP6C, PPP6R1 and PPP6R3. In terms of processing, ubiquitinated by the ECS(RAB40C) complex leading to its degradation and decreased PP6 activity. In terms of tissue distribution, widely expressed (at protein level).

Its subcellular location is the nucleus. It localises to the nucleoplasm. It is found in the cytoplasm. The protein resides in the cytosol. The protein localises to the cell projection. Its subcellular location is the lamellipodium. In terms of biological role, putative regulatory subunit of protein phosphatase 6 (PP6) that may be involved in the recognition of phosphoprotein substrates. Involved in the PP6-mediated dephosphorylation of NFKBIE opposing its degradation in response to TNF-alpha. Selectively inhibits the phosphatase activity of PPP1C. Targets PPP1C to modulate HNRPK phosphorylation. Involved in the PP6-mediated dephosphorylation of MOB1 and induced focal adhesion assembly during cell migration. In Mus musculus (Mouse), this protein is Serine/threonine-protein phosphatase 6 regulatory ankyrin repeat subunit A (Ankrd28).